The primary structure comprises 110 residues: Small ribosomal subunit protein uS10m (110 aa).

This sequence belongs to the universal ribosomal protein uS10 family.

The protein resides in the mitochondrion. This chain is Small ribosomal subunit protein uS10m (RPS10), found in Pisum sativum (Garden pea).